Consider the following 387-residue polypeptide: Aminodeoxyfutalosine synthase (387 aa).

Positions 52-279 (VHFNVNRHLN…ARTQMATGAE (228 aa)) constitute a Radical SAM core domain. [4Fe-4S] cluster contacts are provided by cysteine 66, cysteine 70, and cysteine 73.

It belongs to the radical SAM superfamily. MqnE family. Requires [4Fe-4S] cluster as cofactor.

The catalysed reaction is 3-[(1-carboxyvinyl)-oxy]benzoate + S-adenosyl-L-methionine + H2O = 6-amino-6-deoxyfutalosine + hydrogencarbonate + L-methionine + H(+). The protein operates within quinol/quinone metabolism; menaquinone biosynthesis. In terms of biological role, radical SAM enzyme that catalyzes the addition of the adenosyl radical to the double bond of 3-[(1-carboxyvinyl)oxy]benzoate, leading to aminodeoxyfutalosine (AFL), a key intermediate in the formation of menaquinone (MK, vitamin K2) from chorismate. The polypeptide is Aminodeoxyfutalosine synthase (Streptomyces coelicolor (strain ATCC BAA-471 / A3(2) / M145)).